The primary structure comprises 237 residues: Small ribosomal subunit protein uS2 (237 aa).

Belongs to the universal ribosomal protein uS2 family.

The sequence is that of Small ribosomal subunit protein uS2 from Clostridioides difficile (strain 630) (Peptoclostridium difficile).